Consider the following 383-residue polypeptide: Cytochrome b (383 aa).

4 helical membrane-spanning segments follow: residues 35–55 (FGSILGIFLMIQIISGFILSM), 79–100 (WLFRLIHMNGASFYFLMMYIHI), 115–135 (WGIGIMILLMSMAAAFMGYVL), and 180–200 (FFSLHFILPLLILFMVILHLF). Heme b is bound by residues His-85 and His-99. Heme b contacts are provided by His-184 and His-198. Residue His-203 coordinates a ubiquinone. 4 consecutive transmembrane segments (helical) span residues 228–248 (IKDLLGFYIILFIFMFINFQF), 290–310 (LGGVIGLVMSILILYIMIFYN), 321–341 (LNKIYYWMFINNFILLTWLGK), and 348–368 (FTNINMLFTTTYFLYFFLNFY).

The protein belongs to the cytochrome b family. In terms of assembly, the main subunits of complex b-c1 are: cytochrome b, cytochrome c1 and the Rieske protein. Heme b is required as a cofactor.

It localises to the mitochondrion inner membrane. In terms of biological role, component of the ubiquinol-cytochrome c reductase complex (complex III or cytochrome b-c1 complex) that is part of the mitochondrial respiratory chain. The b-c1 complex mediates electron transfer from ubiquinol to cytochrome c. Contributes to the generation of a proton gradient across the mitochondrial membrane that is then used for ATP synthesis. This chain is Cytochrome b (MT-CYB), found in Apis mellifera ligustica (Common honeybee).